The following is a 380-amino-acid chain: Glycine betaine/carnitine/choline transport ATP-binding protein OpuCA (380 aa).

An ABC transporter domain is found at 2–236 (LKLEQVSKVY…PANEFVEEFI (235 aa)). 35-42 (GPSGCGKT) is an ATP binding site. CBS domains are found at residues 255–314 (MNRT…VGDV) and 315–373 (YRSD…WGDE).

It belongs to the ABC transporter superfamily. As to quaternary structure, the complex is composed of two ATP-binding proteins (OpuCA), two transmembrane proteins (OpuCB and OpuCD) and a solute-binding protein (OpuCC).

Binds cyclic di-AMP (c-di-AMP), which may regulate the transporter activity. Functionally, involved in a high affinity multicomponent binding-protein-dependent transport system for glycine betaine, carnitine and choline; probably responsible for energy coupling to the transport system. The polypeptide is Glycine betaine/carnitine/choline transport ATP-binding protein OpuCA (opuCA) (Bacillus subtilis (strain 168)).